A 555-amino-acid chain; its full sequence is Formate--tetrahydrofolate ligase (555 aa).

An ATP-binding site is contributed by 64–71; that stretch reads TKAGIGKT.

Belongs to the formate--tetrahydrofolate ligase family.

The enzyme catalyses (6S)-5,6,7,8-tetrahydrofolate + formate + ATP = (6R)-10-formyltetrahydrofolate + ADP + phosphate. Its pathway is one-carbon metabolism; tetrahydrofolate interconversion. In Parabacteroides distasonis (strain ATCC 8503 / DSM 20701 / CIP 104284 / JCM 5825 / NCTC 11152), this protein is Formate--tetrahydrofolate ligase.